The chain runs to 79 residues: Large ribosomal subunit protein uL30 (79 aa).

It belongs to the universal ribosomal protein uL30 family. Part of the 50S ribosomal subunit.

The sequence is that of Large ribosomal subunit protein uL30 from Anaeromyxobacter sp. (strain Fw109-5).